We begin with the raw amino-acid sequence, 159 residues long: Dynein 18 kDa light chain, flagellar outer arm (159 aa).

3 consecutive EF-hand domains span residues 18–53 (EEMD…LGQN), 54–89 (PTEE…NKQM), and 129–159 (ELTV…ALLS). Positions 31, 33, 35, 37, 42, 67, 69, 71, 73, and 78 each coordinate Ca(2+).

In terms of assembly, consists of at least 3 heavy chains (alpha, beta and gamma), 2 intermediate chains and 8 light chains.

It is found in the cell projection. Its subcellular location is the cilium. The protein resides in the flagellum. In terms of biological role, may be involved in the calcium-mediated regulation of dynein motor function. Binds 1 mole of calcium. The polypeptide is Dynein 18 kDa light chain, flagellar outer arm (Chlamydomonas reinhardtii (Chlamydomonas smithii)).